Consider the following 225-residue polypeptide: Uracil-DNA glycosylase (225 aa).

The active-site Proton acceptor is Asp64.

The protein belongs to the uracil-DNA glycosylase (UDG) superfamily. UNG family.

The protein localises to the cytoplasm. It carries out the reaction Hydrolyzes single-stranded DNA or mismatched double-stranded DNA and polynucleotides, releasing free uracil.. Functionally, excises uracil residues from the DNA which can arise as a result of misincorporation of dUMP residues by DNA polymerase or due to deamination of cytosine. This Agathobacter rectalis (strain ATCC 33656 / DSM 3377 / JCM 17463 / KCTC 5835 / VPI 0990) (Eubacterium rectale) protein is Uracil-DNA glycosylase.